The primary structure comprises 188 residues: Elongation factor P (188 aa).

Belongs to the elongation factor P family.

The protein localises to the cytoplasm. It participates in protein biosynthesis; polypeptide chain elongation. Its function is as follows. Involved in peptide bond synthesis. Stimulates efficient translation and peptide-bond synthesis on native or reconstituted 70S ribosomes in vitro. Probably functions indirectly by altering the affinity of the ribosome for aminoacyl-tRNA, thus increasing their reactivity as acceptors for peptidyl transferase. This Rickettsia prowazekii (strain Madrid E) protein is Elongation factor P (efp).